Consider the following 206-residue polypeptide: Glycerol-3-phosphate acyltransferase 1 (206 aa).

The next 5 helical transmembrane spans lie at 7–27 (LVIG…KIFL), 54–74 (ILTC…VYFI), 81–101 (DLSF…WNHF), 114–134 (IVFF…FLVI), and 155–175 (WINF…IMIF).

The protein belongs to the PlsY family. As to quaternary structure, probably interacts with PlsX.

The protein resides in the cell membrane. The catalysed reaction is an acyl phosphate + sn-glycerol 3-phosphate = a 1-acyl-sn-glycero-3-phosphate + phosphate. Its pathway is lipid metabolism; phospholipid metabolism. Catalyzes the transfer of an acyl group from acyl-phosphate (acyl-PO(4)) to glycerol-3-phosphate (G3P) to form lysophosphatidic acid (LPA). This enzyme utilizes acyl-phosphate as fatty acyl donor, but not acyl-CoA or acyl-ACP. This is Glycerol-3-phosphate acyltransferase 1 from Lactobacillus johnsonii (strain CNCM I-12250 / La1 / NCC 533).